An 861-amino-acid polypeptide reads, in one-letter code: Benzylsuccinate synthase alpha subunit (861 aa).

One can recognise a PFL domain in the interval 40-712; the sequence is TERTRRLKAR…QAVGLYMEVG (673 aa). The disordered stretch occupies residues 718 to 744; it reads TPDGRFGGEAADDGGISPYSGTDKKGP. Positions 731-850 constitute a Glycine radical domain; sequence GGISPYSGTD…IIARNEQNFN (120 aa). Glycine radical is present on Gly825.

The protein belongs to the glycyl radical enzyme (GRE) family. BSS subfamily. In terms of assembly, heterohexamer composed of 2 alpha subunits, 2 beta subunits and 2 gamma subunits.

The catalysed reaction is toluene + fumarate = 2-benzylsuccinate. It participates in xenobiotic degradation; toluene degradation. With respect to regulation, activated by the benzylsuccinate synthase activating enzyme BssD. Rapidly inactivated by oxygen. Catalyzes the addition of fumarate to the methyl group of toluene, leading to the formation of benzylsuccinate. The sequence is that of Benzylsuccinate synthase alpha subunit (bssA) from Thauera aromatica.